The chain runs to 411 residues: Heparan-sulfate 6-O-sulfotransferase 1 (411 aa).

Topologically, residues 1–19 (MRRRRAGGRTMVERASKFV) are cytoplasmic. Residues 20 to 37 (LVVAGSACFMLILYQYAG) form a helical; Signal-anchor for type II membrane protein membrane-spanning segment. The Lumenal portion of the chain corresponds to 38 to 411 (PGLSLGAPGG…DYMSHIIEKW (374 aa)). 3'-phosphoadenylyl sulfate is bound at residue 93–101 (HIQKTGGTT). Substrate contacts are provided by residues 123–124 (KK), Arg-140, Trp-145, and His-150. Catalysis depends on His-150, which acts as the Proton acceptor. Residues Arg-185 and Ser-193 each contribute to the 3'-phosphoadenylyl sulfate site. Substrate-binding residues include His-197 and Trp-204. Asn-264 carries N-linked (GlcNAc...) asparagine glycosylation. 317–319 (MQY) contributes to the 3'-phosphoadenylyl sulfate binding site. An N-linked (GlcNAc...) asparagine glycan is attached at Asn-320. Position 323 to 324 (323 to 324 (RA)) interacts with 3'-phosphoadenylyl sulfate. The stretch at 352 to 386 (KDLFQQRYQYKRQLERREQRLRNREERLLHRSKEA) forms a coiled coil. A disordered region spans residues 380–401 (LHRSKEALPREDPEEPGRVPTE).

It belongs to the sulfotransferase 6 family. N-glycosylated. Expressed in fetal brain and liver.

The protein resides in the membrane. It catalyses the reaction alpha-D-glucosaminyl-[heparan sulfate](n) + 3'-phosphoadenylyl sulfate = 6-sulfo-alpha-D-glucosaminyl-[heparan sulfate](n) + adenosine 3',5'-bisphosphate + H(+). In terms of biological role, 6-O-sulfation enzyme which catalyzes the transfer of sulfate from 3'-phosphoadenosine 5'-phosphosulfate (PAPS) to position 6 of the N-sulfoglucosamine residue (GlcNS) of heparan sulfate. Critical for normal neuronal development where it may play a role in neuron branching. May also play a role in limb development. May prefer iduronic acid. This Mus musculus (Mouse) protein is Heparan-sulfate 6-O-sulfotransferase 1.